A 305-amino-acid polypeptide reads, in one-letter code: uncharacterized protein (305 aa).

Positions 1 to 29 (MSKAVSEILGYMYIFGIVMAVLAIVFVQV) are cleaved as a signal peptide.

This is an uncharacterized protein from Archaeoglobus fulgidus (strain ATCC 49558 / DSM 4304 / JCM 9628 / NBRC 100126 / VC-16).